The following is an 87-amino-acid chain: UPF0367 protein SynWH7803_2240 (87 aa).

It belongs to the UPF0367 family.

This is UPF0367 protein SynWH7803_2240 from Synechococcus sp. (strain WH7803).